We begin with the raw amino-acid sequence, 377 residues long: MACPCGARVLVEILTGLLSLKNQSPSTPPESEGEFTRNYILGPKYIIKAIEIFSTMPNTIPPFEYAPVKTTWLKRDVLLFAHSIGCKAGDELHFLYELHPKFQVFPTYPIVLTFKHADIDIVDFLARNAARTLPPGCPVLDWSVAVDGRRRMEFLCPLPPSSEGKTWDIHTKVLGVFDKGAGKGTVMEMEHVLKQRESGQVYTRAWESVFFKGTGGWGGERGPKMNEHVPSTPPRRPDAVSSFQSNAESAHLYRLNGDYNPLHATPEPGKSLGYGGTIMHGLFSWNITARAVLSQFGGSEGRRLRDFEAMFSSPVKPGDKLDILMWDMGLCKRATSAVRNDESLQEVRFMVKVGDRVVLSNGKALLKCEDEGVEVKL.

Residues Lys-101 and Arg-196 each contribute to the NADP(+) site. Residues 220-243 (ERGPKMNEHVPSTPPRRPDAVSSF) are disordered. The 100-residue stretch at 233-332 (PPRRPDAVSS…ILMWDMGLCK (100 aa)) folds into the MaoC-like domain. NADP(+) contacts are provided by Thr-265 and Ile-287.

The protein belongs to the short-chain dehydrogenases/reductases (SDR) family.

It functions in the pathway siderophore biosynthesis. Functionally, probable dehydratase; part of the gene cluster that mediates the biosynthesis of hydroxamate-containing siderophores that play a critical role in virulence via intracellular iron acquisition during macrophage infection. This chain is Probable dehydratase NIT22, found in Ajellomyces capsulatus (Darling's disease fungus).